The sequence spans 71 residues: Large ribosomal subunit protein bL31 (71 aa).

4 residues coordinate Zn(2+): Cys-16, Cys-18, Cys-36, and Cys-39.

The protein belongs to the bacterial ribosomal protein bL31 family. Type A subfamily. As to quaternary structure, part of the 50S ribosomal subunit. The cofactor is Zn(2+).

Its function is as follows. Binds the 23S rRNA. The sequence is that of Large ribosomal subunit protein bL31 from Syntrophus aciditrophicus (strain SB).